Reading from the N-terminus, the 314-residue chain is UDP-N-acetylenolpyruvoylglucosamine reductase (314 aa).

The FAD-binding PCMH-type domain maps to 31–208 (RIGGPADYYA…LSARFRLTPK (178 aa)). R187 is an active-site residue. Catalysis depends on S237, which acts as the Proton donor. Residue E307 is part of the active site.

It belongs to the MurB family. Requires FAD as cofactor.

It localises to the cytoplasm. It carries out the reaction UDP-N-acetyl-alpha-D-muramate + NADP(+) = UDP-N-acetyl-3-O-(1-carboxyvinyl)-alpha-D-glucosamine + NADPH + H(+). It participates in cell wall biogenesis; peptidoglycan biosynthesis. In terms of biological role, cell wall formation. The polypeptide is UDP-N-acetylenolpyruvoylglucosamine reductase (Agathobacter rectalis (strain ATCC 33656 / DSM 3377 / JCM 17463 / KCTC 5835 / VPI 0990) (Eubacterium rectale)).